Reading from the N-terminus, the 177-residue chain is Large ribosomal subunit protein uL6 (177 aa).

The protein belongs to the universal ribosomal protein uL6 family. As to quaternary structure, part of the 50S ribosomal subunit.

Functionally, this protein binds to the 23S rRNA, and is important in its secondary structure. It is located near the subunit interface in the base of the L7/L12 stalk, and near the tRNA binding site of the peptidyltransferase center. This Rickettsia akari (strain Hartford) protein is Large ribosomal subunit protein uL6.